We begin with the raw amino-acid sequence, 1099 residues long: Carbamoyl phosphate synthase large chain (1099 aa).

Residues 1-402 (MPKREDIKRI…ALGKALRSLE (402 aa)) are carboxyphosphate synthetic domain. Residues Arg129, Arg169, Gly175, Gly176, Glu208, Val210, Glu215, Gly241, Ile242, His243, Gln285, and Glu299 each contribute to the ATP site. Residues 133–328 (KETMEKAGLE…IAKVAALLAV (196 aa)) form the ATP-grasp 1 domain. Residues Gln285, Glu299, and Asn301 each coordinate Mg(2+). 3 residues coordinate Mn(2+): Gln285, Glu299, and Asn301. The tract at residues 403-541 (LDAAPKLDLE…STYNGVENEA (139 aa)) is oligomerization domain. A carbamoyl phosphate synthetic domain region spans residues 542–944 (VPSDREKIMI…AFAKAQIAAG (403 aa)). The ATP-grasp 2 domain occupies 666–857 (AKLLKQIGLK…VARIAAKIMV (192 aa)). ATP contacts are provided by Arg702, Lys741, Leu743, Glu748, Gly773, Val774, His775, Ser776, Gln816, and Glu828. Gln816, Glu828, and Asn830 together coordinate Mg(2+). Mn(2+)-binding residues include Gln816, Glu828, and Asn830. One can recognise an MGS-like domain in the interval 945–1099 (NPLPTTGAIL…VRRLTDTWKM (155 aa)). The segment at 945 to 1099 (NPLPTTGAIL…VRRLTDTWKM (155 aa)) is allosteric domain.

The protein belongs to the CarB family. In terms of assembly, composed of two chains; the small (or glutamine) chain promotes the hydrolysis of glutamine to ammonia, which is used by the large (or ammonia) chain to synthesize carbamoyl phosphate. Tetramer of heterodimers (alpha,beta)4. Mg(2+) serves as cofactor. It depends on Mn(2+) as a cofactor.

The enzyme catalyses hydrogencarbonate + L-glutamine + 2 ATP + H2O = carbamoyl phosphate + L-glutamate + 2 ADP + phosphate + 2 H(+). It carries out the reaction hydrogencarbonate + NH4(+) + 2 ATP = carbamoyl phosphate + 2 ADP + phosphate + 2 H(+). The protein operates within amino-acid biosynthesis; L-arginine biosynthesis; carbamoyl phosphate from bicarbonate: step 1/1. Its pathway is pyrimidine metabolism; UMP biosynthesis via de novo pathway; (S)-dihydroorotate from bicarbonate: step 1/3. Large subunit of the glutamine-dependent carbamoyl phosphate synthetase (CPSase). CPSase catalyzes the formation of carbamoyl phosphate from the ammonia moiety of glutamine, carbonate, and phosphate donated by ATP, constituting the first step of 2 biosynthetic pathways, one leading to arginine and/or urea and the other to pyrimidine nucleotides. The large subunit (synthetase) binds the substrates ammonia (free or transferred from glutamine from the small subunit), hydrogencarbonate and ATP and carries out an ATP-coupled ligase reaction, activating hydrogencarbonate by forming carboxy phosphate which reacts with ammonia to form carbamoyl phosphate. This Thermotoga sp. (strain RQ2) protein is Carbamoyl phosphate synthase large chain.